A 197-amino-acid polypeptide reads, in one-letter code: uncharacterized protein (197 aa).

6 helical membrane passes run 11-31 (AAMVRTGILGFGGGPSVIPLI), 50-70 (ILAIANALPGPIATKMAAYLG), 79-99 (AIVAILAHILPTCLAMVGLFA), 108-128 (AIVAGMIGAVTPVIAVMLGIM), 136-156 (ALKGFGWVTGILFFIIAFIGL), and 158-178 (TLQINPGLVIIIFLAYGAFHF).

Belongs to the chromate ion transporter (CHR) (TC 2.A.51) family.

Its subcellular location is the cell membrane. This is an uncharacterized protein from Bacillus subtilis (strain 168).